Consider the following 497-residue polypeptide: Glycerol kinase (497 aa).

Position 12 (Thr-12) interacts with ADP. ATP contacts are provided by Thr-12, Thr-13, and Ser-14. Position 12 (Thr-12) interacts with sn-glycerol 3-phosphate. Arg-16 serves as a coordination point for ADP. Sn-glycerol 3-phosphate-binding residues include Arg-82, Glu-83, Tyr-134, and Asp-243. Arg-82, Glu-83, Tyr-134, Asp-243, and Gln-244 together coordinate glycerol. Residues Thr-265 and Gly-308 each coordinate ADP. Thr-265, Gly-308, Gln-312, and Gly-411 together coordinate ATP. Position 411 (Gly-411) interacts with ADP.

It belongs to the FGGY kinase family.

The catalysed reaction is glycerol + ATP = sn-glycerol 3-phosphate + ADP + H(+). Its pathway is polyol metabolism; glycerol degradation via glycerol kinase pathway; sn-glycerol 3-phosphate from glycerol: step 1/1. Inhibited by fructose 1,6-bisphosphate (FBP). Its function is as follows. Key enzyme in the regulation of glycerol uptake and metabolism. Catalyzes the phosphorylation of glycerol to yield sn-glycerol 3-phosphate. This chain is Glycerol kinase, found in Sinorhizobium fredii (strain NBRC 101917 / NGR234).